The chain runs to 68 residues: KCNQ1 downstream neighbor protein (68 aa).

A disordered region spans residues 28-68; the sequence is GVASGCSPSKASQEARGKEKCPTLNGQPQWSALFTLPPQRE.

In terms of tissue distribution, shows reduced expression in Wilms' tumor samples.

The chain is KCNQ1 downstream neighbor protein (KCNQ1DN) from Homo sapiens (Human).